A 449-amino-acid polypeptide reads, in one-letter code: UDP-N-acetylmuramoylalanine--D-glutamate ligase (449 aa).

118-124 (GTNGKTT) is an ATP binding site.

It belongs to the MurCDEF family.

It localises to the cytoplasm. The catalysed reaction is UDP-N-acetyl-alpha-D-muramoyl-L-alanine + D-glutamate + ATP = UDP-N-acetyl-alpha-D-muramoyl-L-alanyl-D-glutamate + ADP + phosphate + H(+). It functions in the pathway cell wall biogenesis; peptidoglycan biosynthesis. Its function is as follows. Cell wall formation. Catalyzes the addition of glutamate to the nucleotide precursor UDP-N-acetylmuramoyl-L-alanine (UMA). The protein is UDP-N-acetylmuramoylalanine--D-glutamate ligase of Staphylococcus aureus (strain MSSA476).